A 642-amino-acid polypeptide reads, in one-letter code: Chaperone protein DnaK (642 aa).

Position 200 is a phosphothreonine; by autocatalysis (Thr-200). The span at 600–616 (EAAQQSAGAAGPMPGAP) shows a compositional bias: low complexity. Residues 600-642 (EAAQQSAGAAGPMPGAPAEEEPSDGPRKAKGRVVDAEIVDDDK) are disordered. Residues 623–634 (DGPRKAKGRVVD) show a composition bias toward basic and acidic residues.

This sequence belongs to the heat shock protein 70 family.

Acts as a chaperone. In Akkermansia muciniphila (strain ATCC BAA-835 / DSM 22959 / JCM 33894 / BCRC 81048 / CCUG 64013 / CIP 107961 / Muc), this protein is Chaperone protein DnaK.